The chain runs to 303 residues: UDP-N-acetylenolpyruvoylglucosamine reductase (303 aa).

The FAD-binding PCMH-type domain maps to 29–196; that stretch reads KIGGPADVLV…LEAVLQLEQK (168 aa). R174 is a catalytic residue. S225 acts as the Proton donor in catalysis. Residue E295 is part of the active site.

The protein belongs to the MurB family. FAD serves as cofactor.

The protein resides in the cytoplasm. The catalysed reaction is UDP-N-acetyl-alpha-D-muramate + NADP(+) = UDP-N-acetyl-3-O-(1-carboxyvinyl)-alpha-D-glucosamine + NADPH + H(+). The protein operates within cell wall biogenesis; peptidoglycan biosynthesis. Cell wall formation. In Bacillus licheniformis (strain ATCC 14580 / DSM 13 / JCM 2505 / CCUG 7422 / NBRC 12200 / NCIMB 9375 / NCTC 10341 / NRRL NRS-1264 / Gibson 46), this protein is UDP-N-acetylenolpyruvoylglucosamine reductase.